The primary structure comprises 631 residues: MSKSHAAYIDYALRRTTNMPVEMMGSDVVRLKDYQHFVARVFLGLDSMHSLLLFHETGVGKTMTTVYILKHLKDIYTNWAIILLVKKALIEDPWMNTILRYAPEITKDCIFINYDDQNFRNKFFTNIKTINSKSRICVIIDECHNFISKSLIKEDGKIRPTRSVYNFLSKTIALKNHKMICLSATPIVNSVQEFTMLVNLLRPGSLQHQSLFENKRLVDEKELVSKLGGLCSYIVNNEFSIFDDVEGSASFAKKTVLMRYVNMSKKQEEIYQKAKLAEIKTGISSFRILRRMATTFTFDSFPERQNRDPGEYAQEIATLYNDFKNSLRDREFSKSALDTFKRGELLGGDASAADISLFTELKEKSVKFIDVCLGILASHGKCLVFEPFVNQSGIEILLLYFKVFGISNIEFSSRTKDTRIKAVAEFNQESNTNGECIKTCVFSSSGGEGISFFSINDIFILDMTWNEASLRQIVGRAIRLNSHVLTPPERRYVNVHFIMARLSNGMPTVDEDLFEIIQSKSKEFVQLFRVFKHTSLEWIHANEKDFSPIDNESGWKTLVSRAIDLSSNKNITNKLIEGTNIWYSNSNRLMSINRGFKGVDGRVYDVDGNYLHDMPDNPVIKIHDGKLIYIF.

One can recognise a Helicase ATP-binding domain in the interval 42-204 (FLGLDSMHSL…TMLVNLLRPG (163 aa)). An ATP-binding site is contributed by 55–62 (HETGVGKT). The DEXH box signature appears at 141 to 144 (DECH). The Helicase C-terminal domain maps to 367–532 (KFIDVCLGIL…EFVQLFRVFK (166 aa)). Residues 457-524 (DIFILDMTWN…EIIQSKSKEF (68 aa)) are binding to the cap-specific mRNA (nucleoside-2'-O-)-methyltransferase.

This sequence belongs to the helicase family. NPH I subfamily. Monomer. Interacts (via C-terminus) with RAP94/OPG109 (via N-terminus). Interacts with the cap-specific mRNA (nucleoside-2'-O-)-methyltransferase OPG102.

The protein localises to the virion. It carries out the reaction a ribonucleoside 5'-triphosphate + H2O = a ribonucleoside 5'-diphosphate + phosphate + H(+). Functionally, DNA-dependent ATPase that acts as a 5' to 3' translocase on single-stranded DNA and thereby plays a role in transcription termination of viral early genes. Uses forward translocation in concert with the viral RNA polymerase RAP94/OPG109 subunit and the capping enzyme/VTF to catalyze release of UUUUUNU-containing nascent RNA from the elongation complex. In addition, acts as a positive elongation factor to assist transcription through problematic sequences. In Bos taurus (Bovine), this protein is Nucleoside triphosphatase I (OPG123).